Consider the following 437-residue polypeptide: Chromosomal replication initiator protein DnaA (437 aa).

A domain I, interacts with DnaA modulators region spans residues 1–69 (MLGDTTLKQL…AHLFELSTGI (69 aa)). The interval 69 to 100 (IRPKIEIRLGSLKKDVKSSSPKAGVSKGQKST) is domain II. The domain III, AAA+ region stretch occupies residues 101–315 (ILNPSFTFDS…GIIIKLNAYA (215 aa)). Residues Gly-145, Gly-147, Lys-148, and Thr-149 each coordinate ATP. Residues 316–437 (NLMNQEITLQ…ELKNKIKSRN (122 aa)) form a domain IV, binds dsDNA region.

The protein belongs to the DnaA family. Oligomerizes as a right-handed, spiral filament on DNA at oriC.

It is found in the cytoplasm. In terms of biological role, plays an essential role in the initiation and regulation of chromosomal replication. ATP-DnaA binds to the origin of replication (oriC) to initiate formation of the DNA replication initiation complex once per cell cycle. Binds the DnaA box (a 9 base pair repeat at the origin) and separates the double-stranded (ds)DNA. Forms a right-handed helical filament on oriC DNA; dsDNA binds to the exterior of the filament while single-stranded (ss)DNA is stabiized in the filament's interior. The ATP-DnaA-oriC complex binds and stabilizes one strand of the AT-rich DNA unwinding element (DUE), permitting loading of DNA polymerase. After initiation quickly degrades to an ADP-DnaA complex that is not apt for DNA replication. Binds acidic phospholipids. The chain is Chromosomal replication initiator protein DnaA from Wolinella succinogenes (strain ATCC 29543 / DSM 1740 / CCUG 13145 / JCM 31913 / LMG 7466 / NCTC 11488 / FDC 602W) (Vibrio succinogenes).